The chain runs to 407 residues: Tryptophan 2,3-dioxygenase B (407 aa).

Substrate contacts are provided by residues 71-75 and Arg-143; that span reads FIVTH. His-327 contacts heme. Thr-341 serves as a coordination point for substrate.

Belongs to the tryptophan 2,3-dioxygenase family. As to quaternary structure, homotetramer. Dimer of dimers. It depends on heme as a cofactor.

The enzyme catalyses L-tryptophan + O2 = N-formyl-L-kynurenine. It participates in amino-acid degradation; L-tryptophan degradation via kynurenine pathway; L-kynurenine from L-tryptophan: step 1/2. Its function is as follows. Heme-dependent dioxygenase that catalyzes the oxidative cleavage of the L-tryptophan (L-Trp) pyrrole ring and converts L-tryptophan to N-formyl-L-kynurenine. Catalyzes the oxidative cleavage of the indole moiety. The chain is Tryptophan 2,3-dioxygenase B from Danio rerio (Zebrafish).